The chain runs to 733 residues: LMBR1 domain-containing protein 2 homolog A (733 aa).

The next 5 helical transmembrane spans lie at 1–21, 33–53, 125–145, 163–183, and 191–211; these read MIVIFIFILIAVGLLSTKILH, VYISVWIGWFMCFSIVILVPI, FYFGTLLLTWLVYPLMGSFVL, AYLYLIFGVIGLVVMIWLLAV, and MVGFAMAAANTWGLCLVIILM. Residues 232 to 266 adopt a coiled-coil conformation; sequence LKHLQFKAVELLNSKKKANEELIATMKVIRRIQEK. 4 helical membrane passes run 386-406, 423-443, 468-488, and 513-533; these read AAIVFAVLSLLIIWSEFALAF, VSNIFVQFILFFPLGYEALTC, SIIFSAAYLCRLGAPLCYNFI, and VAPFLGTYFYIYFPLLIVIVC. Disordered regions lie at residues 581–641, 649–668, and 674–696; these read NNIK…TSSA, LKKSSNNNNNNNNNNNPYEQ, and ESNDFDDDDDIESGGAGRPTYNA. The segment covering 596-619 has biased composition (polar residues); it reads DSTSNNPKQIFKSGSTTISKQSPP. Composition is skewed to low complexity over residues 620 to 640 and 654 to 664; these read NLNVSGGNINNNNTNNGNTSS and NNNNNNNNNNN. Residues 674-685 show a composition bias toward acidic residues; it reads ESNDFDDDDDIE.

The protein belongs to the LIMR family.

The protein resides in the membrane. The polypeptide is LMBR1 domain-containing protein 2 homolog A (Dictyostelium discoideum (Social amoeba)).